The sequence spans 206 residues: MLSRATRLLSTKNVVVNSIVKHTTIRSFASHGGGEAGGAYPTEPEAGTQMITRRVEFGDAVYSYKHGNFIVDPIQIRELAEEQQQQQHHVHGPGCSHGHHHDSHANDGHHDEHHDEHHDHVNPDDVEDEFPRGYFLNTPPSVPYPMNPYYLTALCLLPIIGSLFSIRYFDNKSENDYELFRSEYLEANPALKQKYYDITHKYPLSH.

The segment at 81–132 (EEQQQQQHHVHGPGCSHGHHHDSHANDGHHDEHHDEHHDHVNPDDVEDEFPR) is disordered. Positions 82 to 96 (EQQQQQHHVHGPGCS) are enriched in low complexity. A compositionally biased stretch (basic and acidic residues) spans 103–123 (SHANDGHHDEHHDEHHDHVNP). The chain crosses the membrane as a helical span at residues 150–166 (YLTALCLLPIIGSLFSI).

The protein localises to the membrane. This is an uncharacterized protein from Dictyostelium discoideum (Social amoeba).